The primary structure comprises 608 residues: Albumin (608 aa).

Positions 1–18 (MKWVTFLLLLFISGSAFS) are cleaved as a signal peptide. The propeptide occupies 19–24 (RGVFRR). Albumin domains follow at residues 19-211 (RGVF…AVKE), 212-403 (KALV…EFQP), and 404-601 (LVEE…NLVA). A Cu cation-binding site is contributed by His27. The residue at position 29 (Ser29) is a Phosphoserine. Glu30 and Asp37 together coordinate Ca(2+). Cys77 and Cys86 are disulfide-bonded. At Ser89 the chain carries Phosphoserine. Zn(2+) is bound at residue His91. 6 cysteine pairs are disulfide-bonded: Cys99–Cys115, Cys114–Cys125, Cys148–Cys193, Cys192–Cys201, Cys224–Cys270, and Cys269–Cys277. Glu268 serves as a coordination point for Ca(2+). 2 residues coordinate Zn(2+): His271 and Asp273. The Ca(2+) site is built by Asp273, Glu276, and Asp279. Disulfide bonds link Cys289–Cys303, Cys302–Cys313, Cys340–Cys385, Cys384–Cys393, Cys416–Cys462, Cys461–Cys472, Cys485–Cys501, and Cys500–Cys511. Phosphoserine is present on Ser297. Ser443 is modified (phosphoserine). Residues Thr444 and Thr446 each carry the phosphothreonine modification. An N6-succinyllysine modification is found at Lys460. Residue Ser513 is modified to Phosphoserine. Cystine bridges form between Cys538-Cys583 and Cys582-Cys591. Lys543 carries the N6-succinyllysine modification. N6-methyllysine is present on Lys558. Position 570 is a phosphothreonine (Thr570). Lys588 carries the N6-succinyllysine modification.

This sequence belongs to the ALB/AFP/VDB family. As to quaternary structure, interacts with FCGRT; this interaction regulates ALB homeostasis. Interacts with TASOR. In plasma, occurs in a covalently-linked complex with chromophore-bound alpha-1-microglobulin; this interaction does not prevent fatty acid binding to ALB. Post-translationally, phosphorylated by FAM20C in the extracellular medium. In terms of tissue distribution, plasma.

The protein localises to the secreted. Binds water, Ca(2+), Na(+), K(+), fatty acids, hormones, bilirubin and drugs. Its main function is the regulation of the colloidal osmotic pressure of blood. Major zinc transporter in plasma, typically binds about 80% of all plasma zinc. Major calcium and magnesium transporter in plasma, binds approximately 45% of circulating calcium and magnesium in plasma. Potentially has more than two calcium-binding sites and might additionally bind calcium in a non-specific manner. The shared binding site between zinc and calcium at residue Asp-273 suggests a crosstalk between zinc and calcium transport in the blood. The rank order of affinity is zinc &gt; calcium &gt; magnesium. Binds to the bacterial siderophore enterobactin and inhibits enterobactin-mediated iron uptake of E.coli from ferric transferrin, and may thereby limit the utilization of iron and growth of enteric bacteria such as E.coli. Does not prevent iron uptake by the bacterial siderophore aerobactin. The sequence is that of Albumin (Alb) from Rattus norvegicus (Rat).